The sequence spans 91 residues: DNA-directed RNA polymerase subunit omega (91 aa).

It belongs to the RNA polymerase subunit omega family. As to quaternary structure, the RNAP catalytic core consists of 2 alpha, 1 beta, 1 beta' and 1 omega subunit. When a sigma factor is associated with the core the holoenzyme is formed, which can initiate transcription.

The catalysed reaction is RNA(n) + a ribonucleoside 5'-triphosphate = RNA(n+1) + diphosphate. Functionally, promotes RNA polymerase assembly. Latches the N- and C-terminal regions of the beta' subunit thereby facilitating its interaction with the beta and alpha subunits. The sequence is that of DNA-directed RNA polymerase subunit omega from Serratia proteamaculans (strain 568).